A 374-amino-acid polypeptide reads, in one-letter code: Anhydro-N-acetylmuramic acid kinase (374 aa).

Gly12–Asp19 contributes to the ATP binding site.

Belongs to the anhydro-N-acetylmuramic acid kinase family.

The enzyme catalyses 1,6-anhydro-N-acetyl-beta-muramate + ATP + H2O = N-acetyl-D-muramate 6-phosphate + ADP + H(+). It functions in the pathway amino-sugar metabolism; 1,6-anhydro-N-acetylmuramate degradation. Its pathway is cell wall biogenesis; peptidoglycan recycling. Its function is as follows. Catalyzes the specific phosphorylation of 1,6-anhydro-N-acetylmuramic acid (anhMurNAc) with the simultaneous cleavage of the 1,6-anhydro ring, generating MurNAc-6-P. Is required for the utilization of anhMurNAc either imported from the medium or derived from its own cell wall murein, and thus plays a role in cell wall recycling. The protein is Anhydro-N-acetylmuramic acid kinase of Klebsiella pneumoniae subsp. pneumoniae (strain ATCC 700721 / MGH 78578).